A 360-amino-acid chain; its full sequence is Peptide chain release factor 1 (360 aa).

N5-methylglutamine is present on Gln-235.

Belongs to the prokaryotic/mitochondrial release factor family. Post-translationally, methylated by PrmC. Methylation increases the termination efficiency of RF1.

It is found in the cytoplasm. In terms of biological role, peptide chain release factor 1 directs the termination of translation in response to the peptide chain termination codons UAG and UAA. In Janthinobacterium sp. (strain Marseille) (Minibacterium massiliensis), this protein is Peptide chain release factor 1.